The primary structure comprises 172 residues: Sec-independent protein translocase protein TatB (172 aa).

The helical transmembrane segment at 1–21 (MIDLGISKLALIGAVALVVIG) threads the bilayer. A disordered region spans residues 97 to 129 (GDPASRQTATQAAEWRPAPAKSRNGRNSWRNKQ).

It belongs to the TatB family. In terms of assembly, the Tat system comprises two distinct complexes: a TatABC complex, containing multiple copies of TatA, TatB and TatC subunits, and a separate TatA complex, containing only TatA subunits. Substrates initially bind to the TatABC complex, which probably triggers association of the separate TatA complex to form the active translocon.

The protein resides in the cell inner membrane. Its function is as follows. Part of the twin-arginine translocation (Tat) system that transports large folded proteins containing a characteristic twin-arginine motif in their signal peptide across membranes. Together with TatC, TatB is part of a receptor directly interacting with Tat signal peptides. TatB may form an oligomeric binding site that transiently accommodates folded Tat precursor proteins before their translocation. This Ralstonia nicotianae (strain ATCC BAA-1114 / GMI1000) (Ralstonia solanacearum) protein is Sec-independent protein translocase protein TatB.